A 514-amino-acid chain; its full sequence is Probable WRKY transcription factor 4 (514 aa).

Disordered stretches follow at residues 1–28 (MSEKEEAPSTSKSTGAPSRPTLSLPPRP), 175–204 (QPQTEYPPPSQVQSFSSGQAQIPTSAPLPA), and 278–394 (YKGQ…TVTE). Polar residues-rich tracts occupy residues 185-198 (QVQSFSSGQAQIPT) and 286-299 (PPQNTKRGNKDNTA). Positions 223 to 287 (NVDKPADDGY…YKGQHNHEPP (65 aa)) form a DNA-binding region, WRKY 1. A compositionally biased stretch (low complexity) spans 300-313 (NINGSSINNNRGSS). Positions 315-326 (LGASQFQTNSSN) are enriched in polar residues. Basic and acidic residues predominate over residues 359 to 380 (TDVREKDENEPDPKRRSTEVRI). Positions 403 to 468 (SEVDLLDDGY…YEGKHNHDLP (66 aa)) form a DNA-binding region, WRKY 2. Zn(2+) contacts are provided by Cys434, Thr436, Cys439, His463, and His465. The interval 464–514 (NHDLPAAKSSSHAAAAAQLRPDNRPGGLANLNQQQQQQPVARLRLKEEQTT) is disordered. The segment covering 469–480 (AAKSSSHAAAAA) has biased composition (low complexity).

In terms of tissue distribution, in young, mature and senescent leaves.

It localises to the nucleus. Its function is as follows. Transcription factor that binds specifically to the W box (5'-(T)TGAC[CT]-3'), a frequently occurring elicitor-responsive cis-acting element. Has a positive role in resistance to necrotrophic pathogens (e.g. Botrytis cinerea), but a negative effect on plant resistance to biotrophic pathogens (e.g. Pseudomonas syringae). This chain is Probable WRKY transcription factor 4 (WRKY4), found in Arabidopsis thaliana (Mouse-ear cress).